The sequence spans 216 residues: Fibroblast growth factor 17 (216 aa).

Positions 1–22 (MGAARLLPNLTLCLQLLILCCQ) are cleaved as a signal peptide. Asn-137 is a glycosylation site (N-linked (GlcNAc...) asparagine). The disordered stretch occupies residues 195 to 216 (FEFVGSAPTRRTKRTRRPQSQT). Residues 204 to 216 (RRTKRTRRPQSQT) show a composition bias toward basic residues.

The protein belongs to the heparin-binding growth factors family. In terms of assembly, interacts with FGFR3 and FGFR4.

It localises to the secreted. Plays an important role in the regulation of embryonic development and as signaling molecule in the induction and patterning of the embryonic brain. Required for normal brain development. The sequence is that of Fibroblast growth factor 17 (Fgf17) from Mus musculus (Mouse).